Here is a 37-residue protein sequence, read N- to C-terminus: Large ribosomal subunit protein bL36 (37 aa).

This sequence belongs to the bacterial ribosomal protein bL36 family.

The chain is Large ribosomal subunit protein bL36 from Clostridium kluyveri (strain NBRC 12016).